The primary structure comprises 341 residues: Large ribosomal subunit protein uL3 (341 aa).

Disordered stretches follow at residues 1 to 31 (MGHRKLSSPRRGSAGLRPRKRSEELLPSPRS) and 234 to 261 (HRKGSRKVGTKGPSLGTPSYVPQPGQMG).

This sequence belongs to the universal ribosomal protein uL3 family. Part of the 50S ribosomal subunit. Forms a cluster with proteins L14 and L24e.

Functionally, one of the primary rRNA binding proteins, it binds directly near the 3'-end of the 23S rRNA, where it nucleates assembly of the 50S subunit. In Metallosphaera sedula (strain ATCC 51363 / DSM 5348 / JCM 9185 / NBRC 15509 / TH2), this protein is Large ribosomal subunit protein uL3.